Reading from the N-terminus, the 148-residue chain is FAD synthase (148 aa).

ATP is bound by residues 9–10 (TF), 14–17 (HPGH), asparagine 92, and tyrosine 119.

Belongs to the archaeal FAD synthase family. Homodimer. Requires a divalent metal cation as cofactor.

It carries out the reaction FMN + ATP + H(+) = FAD + diphosphate. It functions in the pathway cofactor biosynthesis; FAD biosynthesis; FAD from FMN: step 1/1. Its function is as follows. Catalyzes the transfer of the AMP portion of ATP to flavin mononucleotide (FMN) to produce flavin adenine dinucleotide (FAD) coenzyme. This Methanolacinia petrolearia (strain DSM 11571 / OCM 486 / SEBR 4847) (Methanoplanus petrolearius) protein is FAD synthase.